The sequence spans 137 residues: Small ribosomal subunit protein uS12 (137 aa).

Disordered stretches follow at residues 1–22 (MPTI…SKSP) and 35–57 (ATNN…TPKK). The span at 9–18 (RKPRKSKVSK) shows a compositional bias: basic residues. 3-methylthioaspartic acid is present on D102.

Belongs to the universal ribosomal protein uS12 family. In terms of assembly, part of the 30S ribosomal subunit. Contacts proteins S8 and S17. May interact with IF1 in the 30S initiation complex.

In terms of biological role, with S4 and S5 plays an important role in translational accuracy. Its function is as follows. Interacts with and stabilizes bases of the 16S rRNA that are involved in tRNA selection in the A site and with the mRNA backbone. Located at the interface of the 30S and 50S subunits, it traverses the body of the 30S subunit contacting proteins on the other side and probably holding the rRNA structure together. The combined cluster of proteins S8, S12 and S17 appears to hold together the shoulder and platform of the 30S subunit. This chain is Small ribosomal subunit protein uS12, found in Leuconostoc mesenteroides subsp. mesenteroides (strain ATCC 8293 / DSM 20343 / BCRC 11652 / CCM 1803 / JCM 6124 / NCDO 523 / NBRC 100496 / NCIMB 8023 / NCTC 12954 / NRRL B-1118 / 37Y).